The chain runs to 1423 residues: ABC transporter G family member 40 (1423 aa).

Over residues 1-19 (MEGTSFHQASNSMRRNSSV) the composition is skewed to polar residues. Positions 1-36 (MEGTSFHQASNSMRRNSSVWKKDSGREIFSRSSREE) are disordered. N16 carries an N-linked (GlcNAc...) asparagine glycan. A compositionally biased stretch (basic and acidic residues) spans 20 to 34 (WKKDSGREIFSRSSR). Residues 154 to 427 (LNTLHLVPNR…FETMGFKCPP (274 aa)) form the ABC transporter 1 domain. 187–194 (GPPSSGKT) is a binding site for ATP. A glycan (N-linked (GlcNAc...) asparagine) is linked at N376. The region spanning 505-718 (ELVKTSFSRE…GQNAILANEF (214 aa)) is the ABC transmembrane type-2 1 domain. A run of 6 helical transmembrane segments spans residues 523-543 (FVYY…MTLF), 562-582 (ALFF…SMTI), 611-631 (IPIS…VIGF), 643-663 (ILLV…AALG), 667-687 (IVAN…GGVV), and 696-716 (WWIW…ILAN). N729 carries an N-linked (GlcNAc...) asparagine glycan. A helical membrane pass occupies residues 756–776 (GALLGFVVLFNFGFTLALTFL). The 253-residue stretch at 825-1077 (ITFDNVVYSV…HLINYFESIQ (253 aa)) folds into the ABC transporter 2 domain. 870–877 (GVSGAGKT) lines the ATP pocket. A glycan (N-linked (GlcNAc...) asparagine) is linked at N895. T962 carries the post-translational modification Phosphothreonine. Positions 1150–1364 (TQCMASLWKQ…TLYGLIASQF (215 aa)) constitute an ABC transmembrane type-2 2 domain. The next 6 helical transmembrane spans lie at 1174 to 1194 (FLFT…LGGK), 1207 to 1227 (SMYT…QPVV), 1257 to 1277 (IPYV…MIGF), 1284 to 1304 (FFWY…YGMM), 1314 to 1334 (IASV…GFLI), and 1341 to 1361 (VWWE…GLIA). A glycan (N-linked (GlcNAc...) asparagine) is linked at N1375. A helical transmembrane segment spans residues 1395–1415 (VVAAMNVIFPLLFAVIFAIGI).

It belongs to the ABC transporter superfamily. ABCG family. PDR (TC 3.A.1.205) subfamily. In terms of assembly, interacts with LECRK91 and LECRK92. In terms of tissue distribution, mostly observed in inflorescence meristems relative to cauline leaves and developing siliques. Ubiquitous with higher levels in leaves, stems and flowers. Also present in primary and lateral roots. In seeds, mainly expressed in the embryo and, to a lesser extent, in the endosperm.

It is found in the cell membrane. The enzyme catalyses abscisate(out) + ATP + H2O = abscisate(in) + ADP + phosphate + H(+). Inhibited by glibenclamide, verapamil and vanadate (ABC transporters inhibitors). Functionally, high affinity abscisic acid (ABA) transporter that mediates the import of ABA, with a preference for (+)-ABA, through the plasma membrane, especially in guard cells, and is involved in the intercellular and intracellular ABA signaling pathways leading, for example, to stomatal closure, thus conferring drought tolerance. Together with ABCG30, import into the embryo the ABA delivered from the endosperm via ABCG25 and ABCG31-mediated export to suppress radicle extension and subsequent embryonic growth. May be a general defense protein. Functions as a pump to exclude Pb(2+) ions and/or Pb(2+)-containing toxic compounds from the cytoplasm. Contributes to Pb(2+) ions resistance. Confers some resistance to the terpene sclareol. Its function is as follows. (Microbial infection) Involved in resistance response to the pathogenic oomycetes Phytophthora infestans and Phytophthora capsici. This chain is ABC transporter G family member 40, found in Arabidopsis thaliana (Mouse-ear cress).